A 585-amino-acid chain; its full sequence is Amyloid protein-binding protein 2 (585 aa).

TPR repeat units lie at residues 50–83 (QGRLCQLGSEFCELEVFAKVLRALDKRHLLHHCF), 120–153 (IQVGFVLGGFLSDAGWYSDAEKVFLSCLQLCTLH), 206–239 (AALYGELCALLFAKSHYDEAYKWCVEAMKEITAG), 288–321 (SDTLLDYGFYLLNVDNICQSVAIYQAALDIRQSV), 333–367 (HEDLAYSSYVHQYSSGKFDNALFHAERAIGIITHI), 429–462 (AKHYGNLGRLYQSMRKFKEAEEMHIKAIQIKEQL), 471–505 (ALSVGHLASLYNYDMNQYENAEKLYLRSIAIGKKL), and 514–547 (EYDYRGLIKLYNSIGNYEKVFEYHNVLSNWNRLR).

As to quaternary structure, component of a CRL2 E3 ubiquitin-protein ligase complex, also named ECS (Elongin BC-CUL2/5-SOCS-box protein) complex, composed of CUL2, Elongin BC (ELOB and ELOC), RBX1 and substrate-specific adapter APPBP2. Interacts with APP; APP interaction inhibits the E3 ubiquitin-protein ligase activity of the CRL2(APPBP2) complex. Post-translationally, rapidly degraded by the proteasome upon overexpression of a C-terminal fragment of APP.

Its subcellular location is the nucleus. The protein resides in the cytoplasm. The protein localises to the cytoskeleton. It localises to the membrane. Its pathway is protein modification; protein ubiquitination. Its activity is regulated as follows. E3 ubiquitin-protein ligase activity of the CRL2(APPBP2) complex is inhibited by APP. In terms of biological role, substrate-recognition component of a Cul2-RING (CRL2) E3 ubiquitin-protein ligase complex of the DesCEND (destruction via C-end degrons) pathway, which recognizes a C-degron located at the extreme C terminus of target proteins, leading to their ubiquitination and degradation. The C-degron recognized by the DesCEND pathway is usually a motif of less than ten residues and can be present in full-length proteins, truncated proteins or proteolytically cleaved forms. The CRL2(APPBP2) complex specifically recognizes proteins with a -Arg-Xaa-Xaa-Gly degron at the C-terminus, leading to their ubiquitination and degradation. The CRL2(APPBP2) complex mediates ubiquitination and degradation of truncated SELENOV selenoproteins produced by failed UGA/Sec decoding, which end with a -Arg-Xaa-Xaa-Gly degron. May play a role in intracellular protein transport: may be involved in the translocation of APP along microtubules toward the cell surface. The chain is Amyloid protein-binding protein 2 from Mus musculus (Mouse).